Consider the following 57-residue polypeptide: UPF0391 membrane protein Xaut_1725 (57 aa).

2 consecutive transmembrane segments (helical) span residues 4–24 (WAVT…GGIA) and 30–50 (IAKI…VAGL).

The protein belongs to the UPF0391 family.

Its subcellular location is the cell membrane. This is UPF0391 membrane protein Xaut_1725 from Xanthobacter autotrophicus (strain ATCC BAA-1158 / Py2).